The sequence spans 515 residues: MEFVVSPFAFLIFFFILLKMIAKNFKNPKKNTKPLPPGPKKLPIIGNLHQLGGGLAHHILRDLSQNYGPLMHLKIGELSTIVISSTEMAKQVFKVHDIHFSNRPSHILVFKIVSYDYKDIVLSQYGNYWRELRKVCNLHLLSPNRVQSFRFIREDSVLNMMKSISSNEGKVVNLSEMILSLIYGITARAAFGVWSKRHEEFIRLESEIQRLATTFVLADMFPSIKILGALSGLRYKVEKVHKKVDEILEDILKEHRNNNISIEKEEEEEEENNGGKKDLVDVLLDIQKNGEMETPFTDQHIKAIIFDMFSAGTLTSTIAVDWAMAEMMKNPRVMKRAQEEVRNVYNGIGNVNESKLDELKYLQAIIKETLRIHPGTPIVHRETREECEINGYRIPAKARVMVNAWAISRDPNYWPDPDSFKPERFLGSEVDFKGTHFEYTPFGAGRRICPGISYAIANIQLPLAQLLYHFDWKLAGGMKPEELDMAEILGTAAQRKEDLLLIPNSHSCSSLKQQV.

The chain crosses the membrane as a helical span at residues 1 to 21 (MEFVVSPFAFLIFFFILLKMI). Residues N173, N259, and N352 are each glycosylated (N-linked (GlcNAc...) asparagine). A heme-binding site is contributed by C449.

The protein belongs to the cytochrome P450 family. Heme serves as cofactor. In terms of tissue distribution, mainly expressed in aerial organs, including stems, leaves and flowers.

The protein localises to the endoplasmic reticulum membrane. The catalysed reaction is (-)-tabersonine + reduced [NADPH--hemoprotein reductase] + O2 = lochnericine + oxidized [NADPH--hemoprotein reductase] + H2O + H(+). The protein operates within alkaloid biosynthesis. Component of the monoterpenoid indole alkaloids (MIAs, e.g. echitovenine, tabersonine, lochnericine, 19-hydroxytabersonine and horhammericine) biosynthetic pathway; MIAs are used in cancer treatment and other medical applications. Cytochrome P450 catalyzing the conversion of tabersonine to lochnericine. This Catharanthus roseus (Madagascar periwinkle) protein is Tabersonine 6,7-epoxidase isoform 2.